Here is a 113-residue protein sequence, read N- to C-terminus: Probable leucocin-A immunity protein (113 aa).

The protein belongs to the immunity protein EntA family.

Its function is as follows. Imparts immunity to leucocin-A to naturally sensitive host strains. This is Probable leucocin-A immunity protein from Leuconostoc gelidum.